A 267-amino-acid polypeptide reads, in one-letter code: 26S proteasome non-ATPase regulatory subunit 8 homolog A (267 aa).

Residue Met-1 is modified to N-acetylmethionine. Positions 79–251 constitute a PCI domain; the sequence is DAFERDFFQL…APCKEIPSLQ (173 aa).

This sequence belongs to the proteasome subunit S14 family. Component of the 19S regulatory particle (RP/PA700) lid subcomplex of the 26S proteasome. The 26S proteasome is composed of a core protease (CP), known as the 20S proteasome, capped at one or both ends by the 19S regulatory particle (RP/PA700). The RP/PA700 complex is composed of at least 17 different subunits in two subcomplexes, the base and the lid, which form the portions proximal and distal to the 20S proteolytic core, respectively. Interacts with PUB22 and PUB23. Binds to the translation initiation factors TIF3E1. Interacts with UCH1 and UCH2. Post-translationally, ubiquitinated by PUB22 and PUB23. Ubiquitous with highest expression in flowers.

In terms of biological role, acts as a regulatory subunit of the 26S proteasome which is involved in the ATP-dependent degradation of ubiquitinated proteins. May help to control the degradation of one or more factors that repress cytokinin signaling. Plays an important role for balancing cell expansion with cell proliferation rates during shoot development. This Arabidopsis thaliana (Mouse-ear cress) protein is 26S proteasome non-ATPase regulatory subunit 8 homolog A.